A 320-amino-acid polypeptide reads, in one-letter code: Solute carrier family 25 member 33 (320 aa).

Solcar repeat units follow at residues 9–118 (ENTL…AKEQ), 126–213 (NSNT…LKKC), and 231–315 (SGFF…IVYL). Transmembrane regions (helical) follow at residues 12 to 32 (LLHL…TCPL), 49 to 65 (VYYP…AGMV), 121 to 141 (GIFV…AAFV), 190 to 210 (LTAS…YESL), 233 to 253 (FFGL…IAYP), and 298 to 318 (QIPN…LLGE).

Belongs to the mitochondrial carrier (TC 2.A.29) family.

Its subcellular location is the mitochondrion inner membrane. It catalyses the reaction UTP(in) + UDP(out) = UTP(out) + UDP(in). It carries out the reaction dUTP(out) + UTP(in) = dUTP(in) + UTP(out). The enzyme catalyses 5-methyl-UTP(out) + UTP(in) = 5-methyl-UTP(in) + UTP(out). The catalysed reaction is 5-methyl-UDP(out) + UTP(in) = 5-methyl-UDP(in) + UTP(out). It catalyses the reaction UTP(in) + CTP(out) = UTP(out) + CTP(in). It carries out the reaction CDP(out) + UTP(in) = CDP(in) + UTP(out). The enzyme catalyses dCTP(out) + UTP(in) = dCTP(in) + UTP(out). The catalysed reaction is dCDP(out) + UTP(in) = dCDP(in) + UTP(out). It catalyses the reaction UTP(in) + GTP(out) = UTP(out) + GTP(in). It carries out the reaction UTP(in) + GDP(out) = UTP(out) + GDP(in). The enzyme catalyses dGTP(out) + UTP(in) = dGTP(in) + UTP(out). The catalysed reaction is dGDP(out) + UTP(in) = dGDP(in) + UTP(out). It catalyses the reaction ITP(out) + UTP(in) = ITP(in) + UTP(out). In terms of biological role, mitochondrial transporter that imports/exports pyrimidine nucleotides into and from mitochondria. Selectively transports uridine, thymidine, guanosine, cytosine and inosine (deoxy)nucleoside di- and triphosphates by an antiport mechanism. May import (deoxy)nucleoside triphosphates in exchange for intramitochondrial (deoxy)nucleoside diphosphates, thus providing precursors necessary for de novo synthesis of mitochondrial DNA and RNA while exporting products of their catabolism. Participates in mitochondrial genome maintenance, regulation of mitochondrial membrane potential and mitochondrial respiration. Upon INS or IGF1 stimulation regulates cell growth and proliferation by controlling mitochondrial DNA replication and transcription, the ratio of mitochondria-to nuclear-encoded components of the electron transport chain resulting in control of mitochondrial ROS production. Participates in dendritic cell endocytosis and may associate with mitochondrial oxidative phosphorylation. The polypeptide is Solute carrier family 25 member 33 (Slc25a33) (Mus musculus (Mouse)).